Consider the following 380-residue polypeptide: Cytochrome b (380 aa).

4 helical membrane-spanning segments follow: residues 34-54 (FGSLLGICLMTQILTGLLLAM), 78-99 (WLIRNLHANGASFFFICIYFHI), 114-134 (WNTGVVLLLTLMATAFVGYVL), and 179-199 (FFALHFLLPFMIAGLTLIHLT). The heme b site is built by histidine 84 and histidine 98. Heme b-binding residues include histidine 183 and histidine 197. A ubiquinone is bound at residue histidine 202. 4 consecutive transmembrane segments (helical) span residues 227–247 (LKDILGFTLMLLPLTTLALFS), 289–309 (LGGVLALAASVLILFLIPFLH), 321–341 (LSQLLFWVLVANLLILTWVGS), and 348–368 (FIIIGQLASLTYFAILLVLFP).

Belongs to the cytochrome b family. The cytochrome bc1 complex contains 11 subunits: 3 respiratory subunits (MT-CYB, CYC1 and UQCRFS1), 2 core proteins (UQCRC1 and UQCRC2) and 6 low-molecular weight proteins (UQCRH/QCR6, UQCRB/QCR7, UQCRQ/QCR8, UQCR10/QCR9, UQCR11/QCR10 and a cleavage product of UQCRFS1). This cytochrome bc1 complex then forms a dimer. The cofactor is heme b.

It is found in the mitochondrion inner membrane. Its function is as follows. Component of the ubiquinol-cytochrome c reductase complex (complex III or cytochrome b-c1 complex) that is part of the mitochondrial respiratory chain. The b-c1 complex mediates electron transfer from ubiquinol to cytochrome c. Contributes to the generation of a proton gradient across the mitochondrial membrane that is then used for ATP synthesis. The polypeptide is Cytochrome b (MT-CYB) (Halobaena caerulea (Blue petrel)).